Here is a 138-residue protein sequence, read N- to C-terminus: Phosphoribosyl-AMP cyclohydrolase (138 aa).

Residue Asp84 participates in Mg(2+) binding. Position 85 (Cys85) interacts with Zn(2+). 2 residues coordinate Mg(2+): Asp86 and Asp88. Zn(2+)-binding residues include Cys102 and Cys109.

It belongs to the PRA-CH family. As to quaternary structure, homodimer. Requires Mg(2+) as cofactor. Zn(2+) is required as a cofactor.

It is found in the cytoplasm. It carries out the reaction 1-(5-phospho-beta-D-ribosyl)-5'-AMP + H2O = 1-(5-phospho-beta-D-ribosyl)-5-[(5-phospho-beta-D-ribosylamino)methylideneamino]imidazole-4-carboxamide. It participates in amino-acid biosynthesis; L-histidine biosynthesis; L-histidine from 5-phospho-alpha-D-ribose 1-diphosphate: step 3/9. In terms of biological role, catalyzes the hydrolysis of the adenine ring of phosphoribosyl-AMP. The protein is Phosphoribosyl-AMP cyclohydrolase of Burkholderia multivorans (strain ATCC 17616 / 249).